The following is a 557-amino-acid chain: Formate--tetrahydrofolate ligase (557 aa).

66–73 (TPAGEGKS) is an ATP binding site.

The protein belongs to the formate--tetrahydrofolate ligase family.

The enzyme catalyses (6S)-5,6,7,8-tetrahydrofolate + formate + ATP = (6R)-10-formyltetrahydrofolate + ADP + phosphate. It functions in the pathway one-carbon metabolism; tetrahydrofolate interconversion. The sequence is that of Formate--tetrahydrofolate ligase from Clostridium botulinum (strain 657 / Type Ba4).